Here is a 504-residue protein sequence, read N- to C-terminus: Pyruvate kinase (504 aa).

Arg53 provides a ligand contact to substrate. K(+)-binding residues include Asn55, Ser57, Asp88, and Thr89. 55–58 (NFSH) is a binding site for ATP. Residues Arg95 and Lys181 each contribute to the ATP site. Glu246 lines the Mg(2+) pocket. Positions 269, 270, and 302 each coordinate substrate. Residue Asp270 participates in Mg(2+) binding.

This sequence belongs to the pyruvate kinase family. As to quaternary structure, homotetramer. Mg(2+) is required as a cofactor. Requires K(+) as cofactor.

It carries out the reaction pyruvate + ATP = phosphoenolpyruvate + ADP + H(+). It participates in carbohydrate degradation; glycolysis; pyruvate from D-glyceraldehyde 3-phosphate: step 5/5. This is Pyruvate kinase (PYK1) from Debaryomyces hansenii (strain ATCC 36239 / CBS 767 / BCRC 21394 / JCM 1990 / NBRC 0083 / IGC 2968) (Yeast).